We begin with the raw amino-acid sequence, 149 residues long: Detocs response regulatory protein DtcB (149 aa).

Positions 1-134 (MILIVEDDAH…DIEACYYDHN (134 aa)) constitute a Response regulatory domain. Position 53 is a 4-aspartylphosphate (D53).

Probably phosphorylated by DtcA.

In terms of biological role, possible phosphate scavenger member of the two-component regulatory system Detocs that confers resistance to bacteriophage. When the system (DtcA-DtcB-DtcC) is expressed in a susceptible E.coli (strain MG1655) it confers resistance to bacteriophages T2, T4, T5, T6 and SECphi27. Detocs inhibits T5 infection leading to growth arrest but not complete cell lysis, during SECphi27 infection leads to cell lysis. Overexpression of this protein along with the intact Detocs locus cancels T5 immunity; when the phosphate-receiving Asp-53 is mutated to Ala in this protein, immunity is restored. DtcA probably autophosphorylates upon sensing viral infection, and subsequently transfers the phosphate signal to DtcC which activates it, leading to an antiviral defense; DtcB (this subunit) may scavenge phosphorylation signals from accidental activation of DtcA. The polypeptide is Detocs response regulatory protein DtcB (Vibrio alginolyticus).